Reading from the N-terminus, the 210-residue chain is DNA-directed RNA polymerases I, II, and III subunit RPABC1 (210 aa).

M1 carries the post-translational modification N-acetylmethionine. A Glycyl lysine isopeptide (Lys-Gly) (interchain with G-Cter in SUMO2) cross-link involves residue K81.

The protein belongs to the archaeal Rpo5/eukaryotic RPB5 RNA polymerase subunit family. In terms of assembly, component of the RNA polymerase I (Pol I), RNA polymerase II (Pol II) and RNA polymerase III (Pol III) complexes consisting of at least 13, 12 and 17 subunits, respectively. Pol I complex consists of a ten-subunit catalytic core composed of POLR1A/RPA1, POLR1B/RPA2, POLR1C/RPAC1, POLR1D/RPAC2, POLR1H/RPA12, POLR2E/RPABC1, POLR2F/RPABC2, POLR2H/RPABC3, POLR2K/RPABC4 and POLR2L/RPABC5; a mobile stalk subunit POLR1F/RPA43 protruding from the core and additional subunits homologous to general transcription factors POLR1E/RPA49 and POLR1G/RPA34. Part of Pol I pre-initiation complex (PIC), in which Pol I core assembles with RRN3 and promoter-bound UTBF and SL1/TIF-IB complex. Pol II complex contains a ten-subunit catalytic core composed of POLR2A/RPB1, POLR2B/RPB2, POLR2C/RPB3, POLR2I/RPB9, POLR2J/RPB11, POLR2E/RPABC1, POLR2F/RPABC2, POLR2H/RPABC3, POLR2K/RPABC4 and POLR2L/RPABC5 and a mobile stalk composed of two subunits POLR2D/RPB4 and POLR2G/RPB7. Part of Pol II(G) complex, in which Pol II core associates with an additional subunit POLR2M; unlike conventional Pol II, Pol II(G) functions as a transcriptional repressor. Part of TBP-based Pol II pre-initiation complex (PIC), in which Pol II core assembles with general transcription factors and other specific initiation factors including GTF2E1, GTF2E2, GTF2F1, GTF2F2, TCEA1, ERCC2, ERCC3, GTF2H2, GTF2H3, GTF2H4, GTF2H5, GTF2A1, GTF2A2, GTF2B and TBP; this large multi-subunit PIC complex mediates DNA unwinding and targets Pol II core to the transcription start site where the first phosphodiester bond forms. In Pol II complex, this subunit is present in 2-fold molar excess over the other subunits. Pol III complex consists of a ten-subunit catalytic core composed of POLR3A/RPC1, POLR3B/RPC2, POLR1C/RPAC1, POLR1D/RPAC2, POLR3K/RPC10, POLR2E/RPABC1, POLR2F/RPABC2, POLR2H/RPABC3, POLR2K/RPABC4 and POLR2L/RPABC5; a mobile stalk composed of two subunits POLR3H/RPC8 and CRCP/RPC9, protruding from the core and functioning primarily in transcription initiation; and additional subunits homologous to general transcription factors of the RNA polymerase II machinery, POLR3C/RPC3-POLR3F/RPC6-POLR3G/RPC7 heterotrimer required for transcription initiation and POLR3D/RPC4-POLR3E/RPC5 heterodimer involved in both transcription initiation and termination. Component of the PAQosome complex which is responsible for the biogenesis of several protein complexes and which consists of R2TP complex members RUVBL1, RUVBL2, RPAP3 and PIH1D1, URI complex members PFDN2, PFDN6, PDRG1, UXT and URI1 as well as ASDURF, POLR2E and DNAAF10/WDR92. Interacts with URI1.

The protein resides in the nucleus. The protein localises to the nucleolus. In terms of biological role, DNA-dependent RNA polymerase catalyzes the transcription of DNA into RNA using the four ribonucleoside triphosphates as substrates. Common component of RNA polymerases I, II and III which synthesize ribosomal RNA precursors, mRNA precursors and many functional non-coding RNAs, and small RNAs, such as 5S rRNA and tRNAs, respectively. Pol II is the central component of the basal RNA polymerase II transcription machinery. Pols are composed of mobile elements that move relative to each other. In Pol II, POLR2E/RPABC1 is part of the lower jaw surrounding the central large cleft and thought to grab the incoming DNA template. Seems to be the major component in this process. The sequence is that of DNA-directed RNA polymerases I, II, and III subunit RPABC1 (POLR2E) from Pongo abelii (Sumatran orangutan).